We begin with the raw amino-acid sequence, 122 residues long: ETAAEKFQRQHMDTEHSTASSSNYCNLMMKAREMTSDRCKPVNTFIHEPKSVVDAVCXQENVTCKNGQTNCYKSNSRLSITNCRQTGASXYPNCQYETSNLQKQIIVACEGQYVPVHFDAYV.

Substrate-binding residues include K6 and R9. The active-site Proton acceptor is the H11. Intrachain disulfides connect C25–C83, C39–C94, C57–C109, and C64–C71. Substrate contacts are provided by residues 40–44, K65, and R84; that span reads KPVNT. The Proton donor role is filled by H117.

The protein belongs to the pancreatic ribonuclease family. As to quaternary structure, monomer. Interacts with and forms tight 1:1 complexes with RNH1. Dimerization of two such complexes may occur. Interaction with RNH1 inhibits this protein. As to expression, pancreas.

The protein localises to the secreted. The catalysed reaction is an [RNA] containing cytidine + H2O = an [RNA]-3'-cytidine-3'-phosphate + a 5'-hydroxy-ribonucleotide-3'-[RNA].. It catalyses the reaction an [RNA] containing uridine + H2O = an [RNA]-3'-uridine-3'-phosphate + a 5'-hydroxy-ribonucleotide-3'-[RNA].. In terms of biological role, endonuclease that catalyzes the cleavage of RNA on the 3' side of pyrimidine nucleotides. Acts on single-stranded and double-stranded RNA. The sequence is that of Ribonuclease pancreatic from Notamacropus rufogriseus (Red-necked wallaby).